Here is a 229-residue protein sequence, read N- to C-terminus: Heptahelical transmembrane protein ADIPOR2 (229 aa).

Over 1 to 4 (MQGA) the chain is Cytoplasmic. Residues 5 to 25 (ASHDAAAAAAAAAVLGGGHGV) form a helical membrane-spanning segment. The Extracellular segment spans residues 26 to 30 (PRWPR). The chain crosses the membrane as a helical span at residues 31–51 (MVFLVGAMTCLAISATAHLLA). Residues 52–66 (CHSRRASVVFWQLDY) lie on the Cytoplasmic side of the membrane. Residues 67-87 (AGISAMIVASFVPPVYYAFLC) traverse the membrane as a helical segment. Topologically, residues 88–92 (HRPAR) are extracellular. Residues 93 to 113 (VAYLSAISALGALVVGALLSP) form a helical membrane-spanning segment. At 114 to 124 (PCSSPRFRRLR) the chain is on the cytoplasmic side. The chain crosses the membrane as a helical span at residues 125–145 (AALFLAMGLSGVVPALHALWL). The Extracellular portion of the chain corresponds to 146 to 153 (NWGHAACY). Residues 154–174 (LALSLEVAMGLAYAAGAWFYV) traverse the membrane as a helical segment. Topologically, residues 175–194 (SRVPEKWRPGVFDVVGHSHQ) are cytoplasmic. A helical transmembrane segment spans residues 195–215 (IFHVLVLVGAVTHYVAVDVLL). Residues 216–229 (NWRETVAAACSATS) lie on the Extracellular side of the membrane.

Belongs to the ADIPOR family.

It is found in the membrane. Functionally, may play a role in abiotic stress response. This is Heptahelical transmembrane protein ADIPOR2 (ADIPOR2) from Oryza sativa subsp. japonica (Rice).